The chain runs to 538 residues: MRHVQAELSPSSEPEAGPSQPPVTQGTLQGGLLMGYSPAGGATSPGVYQVSIFSPSAGVSEPPRALKRPAPSTEGPRELKRGPGLGAREGLPPEEPSTVGLVSPEGLGLGLGVASQHFSHHGLRVVEQGGSATSSWTSGTQSTPWPSSNASCNTLHTRDWAFPDQGGQGCLGESPGPAPSGQLHTLDTDLHNLAQIGGKSPVARVGNGSNPWPRESHGTANGHSPEHTPPGPGPPGPCPTKRRLLPAGEALDVSSEDEGPAPRRRRGTLGCPLAANSSDAKATPFWSHLLPGPKEPVLDPTDRSPMGRRLKGARRLKLSSLRTLRKGPGLLSPPSASPFPTPAVSRTLLGNFEESLLRGRFAPSGHIEGFTAEIGASGSYCPQHVTLPVTVTFFDVSEQNAPAPFLGVVDLNPLGRKGYSVPKVGTIQVTLFNPNQTVVKMFLVTFDFSDMPAAHMTFLRHRLFLVPVGEEGNVSPTHRLLCYLLHLRFRSSRSGRLSLHGDIRLLFSRRSLELDTGLPYELQAVTEAPHNPRYSPLP.

Disordered regions lie at residues M1–S103, G130–N149, P163–T185, and K199–P272. Positions G130–S148 are enriched in low complexity. Residues H227–C238 are compositionally biased toward pro residues. 2 positions are modified to phosphoserine: S254 and S255. Residues L348–T430 form a required for macropage invasion region. The tract at residues Q436–V444 is transactivation domain 1 (TAD1).

The protein belongs to the ATOS family.

Its subcellular location is the nucleus. In terms of biological role, transcription regulator that may syncronize transcriptional and translational programs. In Rattus norvegicus (Rat), this protein is Atos homolog protein B.